Consider the following 155-residue polypeptide: Ribosomal RNA large subunit methyltransferase H (155 aa).

Residues Leu-72, Gly-103, and 122–127 contribute to the S-adenosyl-L-methionine site; that span reads LGRMVW.

This sequence belongs to the RNA methyltransferase RlmH family. As to quaternary structure, homodimer.

Its subcellular location is the cytoplasm. The catalysed reaction is pseudouridine(1915) in 23S rRNA + S-adenosyl-L-methionine = N(3)-methylpseudouridine(1915) in 23S rRNA + S-adenosyl-L-homocysteine + H(+). Functionally, specifically methylates the pseudouridine at position 1915 (m3Psi1915) in 23S rRNA. In Cereibacter sphaeroides (strain ATCC 17029 / ATH 2.4.9) (Rhodobacter sphaeroides), this protein is Ribosomal RNA large subunit methyltransferase H.